The following is a 150-amino-acid chain: Large ribosomal subunit protein uL13 (150 aa).

It belongs to the universal ribosomal protein uL13 family. Part of the 50S ribosomal subunit.

In terms of biological role, this protein is one of the early assembly proteins of the 50S ribosomal subunit, although it is not seen to bind rRNA by itself. It is important during the early stages of 50S assembly. The chain is Large ribosomal subunit protein uL13 from Chlamydia trachomatis serovar A (strain ATCC VR-571B / DSM 19440 / HAR-13).